The following is a 340-amino-acid chain: Entry-fusion complex protein OPG094 (340 aa).

The disordered stretch occupies residues 1-20 (MGGGVSVELPKRDPPPGVPT). The N-myristoyl glycine; by host moiety is linked to residue glycine 2. Residues 2-319 (GGGVSVELPK…VQHNIKHSFD (318 aa)) are Virion surface-facing. Residues 320–340 (LKLHLISLLSLLVIWILIVAI) form a helical; Signal-anchor for type II membrane protein membrane-spanning segment.

Belongs to the orthopoxvirus OPG086 family. In terms of assembly, interacts with OPG143. Component of the entry fusion complex (EFC) composed of OPG053, OPG076, OPG086, OPG094, OPG095, OPG099, OPG107, OPG143, OPG104, OPG147 and OPG155. Except for OPG095 and OPG053, each of the EFC proteins is required for assembly or stability of the complex. In terms of processing, unglycosylated because produced in viral factories instead of the classic ER -Golgi route.

The protein localises to the virion membrane. Functionally, component of the entry fusion complex (EFC), which consists of 11 proteins. During cell infection, this complex mediates entry of the virion core into the host cytoplasm by a two-step mechanism consisting of lipid mixing of the viral and cellular membranes and subsequent pore formation. In Cynomys gunnisoni (Gunnison's prairie dog), this protein is Entry-fusion complex protein OPG094 (OPG094).